Consider the following 503-residue polypeptide: 5'-3' exonuclease PLD4 (503 aa).

Over 1 to 36 (MDKKKEHPEMRIPLQTAVEVSDWPCSTSHDPHSGLG) the chain is Cytoplasmic. The chain crosses the membrane as a signal-anchor for type II membrane protein span at residues 37-57 (MVLGMLAVLGLSSVTLILFLW). Topologically, residues 58–503 (QGATSFTSHR…RQVPSQDCVW (446 aa)) are lumenal. N-linked (GlcNAc...) asparagine glycans are attached at residues asparagine 89, asparagine 148, and asparagine 169. Cysteine 92 and cysteine 248 are oxidised to a cystine. Residues 207 to 234 (TGGVLHSKFWVVDGRHIYVGSANMDWRS) enclose the PLD phosphodiesterase 1 domain. Catalysis depends on residues histidine 212, lysine 214, and aspartate 219. The active-site Proton donor is the histidine 212. Residues asparagine 247, asparagine 279, asparagine 415, and asparagine 425 are each glycosylated (N-linked (GlcNAc...) asparagine). Cysteine 377 and cysteine 501 are oxidised to a cystine. Positions 421–447 (FSRVNHSKFMVTDKTAYVGTSNWSEDY) constitute a PLD phosphodiesterase 2 domain. Active-site residues include histidine 426, lysine 428, and aspartate 433. The active-site Nucleophile is the histidine 426. Asparagine 442 is a glycosylation site (N-linked (GlcNAc...) asparagine).

The protein belongs to the phospholipase D family. Highly N-glycosylated. In terms of tissue distribution, enriched in the white matter of early postnatal brains, as well as in splenic marginal zone cells. Highly expressed in dendritic cells (DCs) and other myeloid cells, with lower expression in B cell.

Its subcellular location is the endoplasmic reticulum membrane. The protein resides in the golgi apparatus. The protein localises to the trans-Golgi network membrane. It is found in the nucleus. It localises to the early endosome. Its subcellular location is the cytoplasmic vesicle. The protein resides in the phagosome. The protein localises to the lysosome. The catalysed reaction is Exonucleolytic cleavage in the 5'- to 3'-direction to yield nucleoside 3'-phosphates.. The enzyme catalyses a 5'-end 5'-dephospho-ribonucleotidyl-ribonucleotide-RNA + H2O = a ribonucleoside 3'-phosphate + a 5'-end dephospho-ribonucleoside-RNA + H(+). It catalyses the reaction a ribonucleoside 3'-phosphate-2'-3'-cyclophospho-GMP + H2O = a ribonucleoside 3'-phosphate + 2',3'-cyclophospho-GMP + H(+). It carries out the reaction a 5'-end 5'-dephospho-2'-deoxyribonucleotidyl-2'-deoxyribonucleotide in single-stranded DNA + H2O = a 5'-end dephospho-2'-deoxyribonucleoside in single-stranded DNA + a 2'-deoxyribonucleoside 3'-phosphate + H(+). The catalysed reaction is a 5'-end 5'-phospho-2'-deoxyribonucleotide in single-stranded DNA + H2O = a 5'-end 5'-dephospho-2'-deoxyribonucleotide in single-stranded DNA + phosphate. The enzyme catalyses a 3-lyso-sn-glycero-1-phospho-(3'-acyl-1'-sn-glycerol) + a 1-acyl-sn-glycerol = a 3-acyl-sn-glycero-1-phospho-(3'-acyl-1'-sn-glycerol) + glycerol. It catalyses the reaction 3-lyso-sn-glycero-1-phospho-(3'-(9Z-octadecenoyl)-1'-sn-glycerol) + 1-(9Z-octadecenoyl)-sn-glycerol = 3-(9Z-octadecenoyl)-sn-glycero-1-phospho-(3'-(9Z-octadecenoyl)-1'-sn-glycerol) + glycerol. The exonuclease activity toward ssDNA substrate is Ca(2+) and Mg(2+)-independent, but it is inhibited by Fe(2+), Cu(2+) and to a lesser extent Zn(2+) ions. Functionally, 5'-&gt;3' exonuclease that hydrolyzes the phosphodiester bond of single-stranded DNA (ssDNA) and RNA molecules to form nucleoside 3'-monophosphates and 5'-end 5'-hydroxy deoxyribonucleotide/ribonucleotide fragments. Partially redundant with PLD4, can cleave all four nucleotides displaying higher efficiency for ssDNA and RNA fragments initiated with uridine and guanosine residues and lower efficiency for cytidine-initiated substrates. As a result, it does not always degrade polynucleotides to the single nucleotide level, it can stall at specific sites sparing certain fragments from exonucleolytic degradation. Processes self and pathogenic ssDNA and RNA molecules that reach the endolysosomal compartment via phagocytosis or autophagy and may serve as 'danger' signals for recognition by innate immune receptors such as toll-like receptors (TLRs). Degrades mitochondrial CpG-rich ssDNA fragments to prevent TLR9 activation and autoinflammatory response, but it can cleave viral RNA to generate ligands for TLR7 activation and initiate antiviral immune responses. In plasmacytoid dendritic cells, it cooperates with endonuclease RNASET2 to release 2',3'-cyclic guanosine monophosphate (2',3'-cGMP), a potent stimulatory ligand for TLR7. Produces 2',3'-cGMPs and cytidine-rich RNA fragments that occupy TLR7 ligand-binding pockets and trigger a signaling-competent state. Can exert polynucleotide phosphatase activity toward 5'-phosphorylated ssDNA substrates although at a slow rate. Transphosphatidylase that catalyzes the exchange with R to S stereo-inversion of the glycerol moiety between (S,R)-lysophosphatidylglycerol (LPG) and monoacylglycerol (MAG) substrates to yield (S,S)-bis(monoacylglycero)phosphate (BMP). Can synthesize a variety of (S,S)-BMPs representing the main phospholipid constituent of lysosomal intralumenal vesicle (ILV) membranes that bind acid hydrolases for lipid degradation. Regulates the homeostasis and interorganellar communication of the endolysosomal system with an overall impact on cellular removal of dysfunctional organelles via autophagy as well as proper protein and lipid turnover. May play a role in myotube formation in response to ER stress. This is 5'-3' exonuclease PLD4 from Mus musculus (Mouse).